We begin with the raw amino-acid sequence, 407 residues long: DNA-directed RNA polymerase subunit Rpo1C (407 aa).

It belongs to the RNA polymerase beta' chain family. As to quaternary structure, part of the RNA polymerase complex.

The protein localises to the cytoplasm. It catalyses the reaction RNA(n) + a ribonucleoside 5'-triphosphate = RNA(n+1) + diphosphate. DNA-dependent RNA polymerase (RNAP) catalyzes the transcription of DNA into RNA using the four ribonucleoside triphosphates as substrates. Forms part of the jaw domain. This Aeropyrum pernix (strain ATCC 700893 / DSM 11879 / JCM 9820 / NBRC 100138 / K1) protein is DNA-directed RNA polymerase subunit Rpo1C.